The sequence spans 264 residues: uncharacterized protein (264 aa).

This is an uncharacterized protein from Bacillus subtilis (strain 168).